The primary structure comprises 313 residues: Glutathione synthetase (313 aa).

Positions 125–309 (KIFVTEFADL…IASLFWDAVE (185 aa)) constitute an ATP-grasp domain. Residue 151-207 (RKEFGDIIVKPLYGNGGAGIFHLHEADRNLASLLEMFGQLFREPYIVQRYLKDVRKG) participates in ATP binding. Mg(2+)-binding residues include Glu-280 and Asn-282.

It belongs to the prokaryotic GSH synthase family. The cofactor is Mg(2+). Mn(2+) serves as cofactor.

The catalysed reaction is gamma-L-glutamyl-L-cysteine + glycine + ATP = glutathione + ADP + phosphate + H(+). It participates in sulfur metabolism; glutathione biosynthesis; glutathione from L-cysteine and L-glutamate: step 2/2. This chain is Glutathione synthetase, found in Mesorhizobium japonicum (strain LMG 29417 / CECT 9101 / MAFF 303099) (Mesorhizobium loti (strain MAFF 303099)).